Reading from the N-terminus, the 301-residue chain is Sulfate adenylyltransferase subunit 2 (301 aa).

This sequence belongs to the PAPS reductase family. CysD subfamily. Heterodimer composed of CysD, the smaller subunit, and CysN.

It catalyses the reaction sulfate + ATP + H(+) = adenosine 5'-phosphosulfate + diphosphate. It participates in sulfur metabolism; hydrogen sulfide biosynthesis; sulfite from sulfate: step 1/3. With CysN forms the ATP sulfurylase (ATPS) that catalyzes the adenylation of sulfate producing adenosine 5'-phosphosulfate (APS) and diphosphate, the first enzymatic step in sulfur assimilation pathway. APS synthesis involves the formation of a high-energy phosphoric-sulfuric acid anhydride bond driven by GTP hydrolysis by CysN coupled to ATP hydrolysis by CysD. The polypeptide is Sulfate adenylyltransferase subunit 2 (Geobacter metallireducens (strain ATCC 53774 / DSM 7210 / GS-15)).